A 160-amino-acid polypeptide reads, in one-letter code: ATP synthase subunit b (160 aa).

A helical membrane pass occupies residues 12–32 (ISFVLFVWFCMKYVWYPFISI).

The protein belongs to the ATPase B chain family. As to quaternary structure, F-type ATPases have 2 components, F(1) - the catalytic core - and F(0) - the membrane proton channel. F(1) has five subunits: alpha(3), beta(3), gamma(1), delta(1), epsilon(1). F(0) has three main subunits: a(1), b(2) and c(10-14). The alpha and beta chains form an alternating ring which encloses part of the gamma chain. F(1) is attached to F(0) by a central stalk formed by the gamma and epsilon chains, while a peripheral stalk is formed by the delta and b chains.

It localises to the cell inner membrane. Functionally, f(1)F(0) ATP synthase produces ATP from ADP in the presence of a proton or sodium gradient. F-type ATPases consist of two structural domains, F(1) containing the extramembraneous catalytic core and F(0) containing the membrane proton channel, linked together by a central stalk and a peripheral stalk. During catalysis, ATP synthesis in the catalytic domain of F(1) is coupled via a rotary mechanism of the central stalk subunits to proton translocation. In terms of biological role, component of the F(0) channel, it forms part of the peripheral stalk, linking F(1) to F(0). The chain is ATP synthase subunit b from Blochmanniella pennsylvanica (strain BPEN).